We begin with the raw amino-acid sequence, 547 residues long: Flagellar hook-associated protein 1 (547 aa).

This sequence belongs to the flagella basal body rod proteins family.

The protein localises to the secreted. It localises to the bacterial flagellum. The sequence is that of Flagellar hook-associated protein 1 (flgK) from Escherichia coli (strain K12).